Here is a 216-residue protein sequence, read N- to C-terminus: Uracil-DNA glycosylase (216 aa).

The active-site Proton acceptor is the aspartate 59.

It belongs to the uracil-DNA glycosylase (UDG) superfamily. UNG family.

It is found in the cytoplasm. It carries out the reaction Hydrolyzes single-stranded DNA or mismatched double-stranded DNA and polynucleotides, releasing free uracil.. Functionally, excises uracil residues from the DNA which can arise as a result of misincorporation of dUMP residues by DNA polymerase or due to deamination of cytosine. The polypeptide is Uracil-DNA glycosylase (Staphylococcus epidermidis (strain ATCC 35984 / DSM 28319 / BCRC 17069 / CCUG 31568 / BM 3577 / RP62A)).